Consider the following 196-residue polypeptide: Holliday junction branch migration complex subunit RuvA (196 aa).

The segment at 1–65 (MIGNLSGTVD…ENTTQLYGFI (65 aa)) is domain I. A domain II region spans residues 66–143 (NKEEQSCLRL…KLETNNNNFY (78 aa)). The segment at 144-147 (PINE) is flexible linker. A domain III region spans residues 147–196 (EDAVSALINLGYEKTKVYDTIKKYKPNLDTKDIIRTALKELSNYEIDIMQ).

Belongs to the RuvA family. As to quaternary structure, homotetramer. Forms an RuvA(8)-RuvB(12)-Holliday junction (HJ) complex. HJ DNA is sandwiched between 2 RuvA tetramers; dsDNA enters through RuvA and exits via RuvB. An RuvB hexamer assembles on each DNA strand where it exits the tetramer. Each RuvB hexamer is contacted by two RuvA subunits (via domain III) on 2 adjacent RuvB subunits; this complex drives branch migration. In the full resolvosome a probable DNA-RuvA(4)-RuvB(12)-RuvC(2) complex forms which resolves the HJ.

The protein resides in the cytoplasm. Its function is as follows. The RuvA-RuvB-RuvC complex processes Holliday junction (HJ) DNA during genetic recombination and DNA repair, while the RuvA-RuvB complex plays an important role in the rescue of blocked DNA replication forks via replication fork reversal (RFR). RuvA specifically binds to HJ cruciform DNA, conferring on it an open structure. The RuvB hexamer acts as an ATP-dependent pump, pulling dsDNA into and through the RuvAB complex. HJ branch migration allows RuvC to scan DNA until it finds its consensus sequence, where it cleaves and resolves the cruciform DNA. The chain is Holliday junction branch migration complex subunit RuvA from Wolbachia sp. subsp. Brugia malayi (strain TRS).